The sequence spans 279 residues: Tryptophan synthase alpha chain (279 aa).

Active-site proton acceptor residues include Glu-50 and Asp-61.

This sequence belongs to the TrpA family. In terms of assembly, tetramer of two alpha and two beta chains.

It catalyses the reaction (1S,2R)-1-C-(indol-3-yl)glycerol 3-phosphate + L-serine = D-glyceraldehyde 3-phosphate + L-tryptophan + H2O. Its pathway is amino-acid biosynthesis; L-tryptophan biosynthesis; L-tryptophan from chorismate: step 5/5. In terms of biological role, the alpha subunit is responsible for the aldol cleavage of indoleglycerol phosphate to indole and glyceraldehyde 3-phosphate. The polypeptide is Tryptophan synthase alpha chain (Rhizobium etli (strain ATCC 51251 / DSM 11541 / JCM 21823 / NBRC 15573 / CFN 42)).